The following is a 118-amino-acid chain: Evasin P546 (118 aa).

The signal sequence occupies residues 1–21 (MKVLLYIAASCLMLLALNVSA). Intrachain disulfides connect Cys38-Cys59, Cys55-Cys96, Cys72-Cys101, and Cys91-Cys110. N-linked (GlcNAc...) asparagine glycosylation occurs at Asn45.

Its subcellular location is the secreted. Its function is as follows. Salivary chemokine-binding protein which binds to host chemokines CCL1, CCL3, CCL5 and CCL22. The polypeptide is Evasin P546 (Amblyomma cajennense (Cayenne tick)).